The primary structure comprises 220 residues: WAP four-disulfide core domain protein 1 (220 aa).

Residues 1–31 (MPLTGVGPGSCRRQIIRALCLLLLLLHAGSA) form the signal peptide. The disordered stretch occupies residues 46 to 70 (KSRAEEAGAPGGPRQPRADRCPPPP). Positions 59–108 (RQPRADRCPPPPRTLPPGACQAARCQADSECPRHRRCCYNGCAYACLEAV) constitute a WAP domain. 4 cysteine pairs are disulfide-bonded: Cys66/Cys96, Cys78/Cys100, Cys83/Cys95, and Cys89/Cys104. The tract at residues 199 to 220 (EYPEGDSKNVAEPGRGQQKHFQ) is disordered.

The protein resides in the secreted. Functionally, has growth inhibitory activity. This chain is WAP four-disulfide core domain protein 1 (WFDC1), found in Homo sapiens (Human).